A 313-amino-acid polypeptide reads, in one-letter code: 1-phosphofructokinase (313 aa).

ATP contacts are provided by residues 222-227 (SMGAKG) and 254-255 (GD). The active-site Proton acceptor is the D255.

This sequence belongs to the carbohydrate kinase PfkB family.

The catalysed reaction is beta-D-fructose 1-phosphate + ATP = beta-D-fructose 1,6-bisphosphate + ADP + H(+). Catalyzes the ATP-dependent phosphorylation of fructose-l-phosphate to fructose-l,6-bisphosphate. This chain is 1-phosphofructokinase (fruK), found in Haemophilus influenzae (strain ATCC 51907 / DSM 11121 / KW20 / Rd).